A 319-amino-acid chain; its full sequence is GTP cyclohydrolase MptA (319 aa).

This sequence belongs to the GTP cyclohydrolase IV family. In terms of assembly, homodimer. Fe(2+) serves as cofactor.

The enzyme catalyses GTP + H2O = 7,8-dihydroneopterin 2',3'-cyclic phosphate + formate + diphosphate + H(+). It participates in cofactor biosynthesis; 5,6,7,8-tetrahydromethanopterin biosynthesis. Converts GTP to 7,8-dihydro-D-neopterin 2',3'-cyclic phosphate, the first intermediate in the biosynthesis of coenzyme methanopterin. This chain is GTP cyclohydrolase MptA, found in Methanosarcina barkeri (strain Fusaro / DSM 804).